Consider the following 279-residue polypeptide: Undecaprenyl-diphosphatase (279 aa).

The next 8 helical transmembrane spans lie at 2–22 (LFIE…TEWL), 44–64 (AFME…VIVI), 85–105 (WQLW…AVPL), 113–133 (FNHM…FLWI), 163–183 (VLSI…AIIL), 188–208 (TVAA…YSGL), 225–245 (LLVL…VIKL), and 255–275 (FTVF…YSVF).

Belongs to the UppP family.

The protein resides in the cell membrane. The enzyme catalyses di-trans,octa-cis-undecaprenyl diphosphate + H2O = di-trans,octa-cis-undecaprenyl phosphate + phosphate + H(+). In terms of biological role, catalyzes the dephosphorylation of undecaprenyl diphosphate (UPP). Confers resistance to bacitracin. The chain is Undecaprenyl-diphosphatase from Streptococcus equi subsp. zooepidemicus (strain MGCS10565).